A 798-amino-acid polypeptide reads, in one-letter code: Phenylalanine--tRNA ligase beta subunit (798 aa).

Residues 39–147 (AARLAGFTLA…PSGEVGERFI (109 aa)) form the tRNA-binding domain. Residues 404 to 475 (DHSRAYKLDA…RIASLTKLVG (72 aa)) form the B5 domain. Mg(2+) contacts are provided by Asp-453, Asp-459, Glu-462, and Glu-463. Residues 704-797 (RDLQAVERDF…VAKATGGTLR (94 aa)) form the FDX-ACB domain.

It belongs to the phenylalanyl-tRNA synthetase beta subunit family. Type 1 subfamily. As to quaternary structure, tetramer of two alpha and two beta subunits. Requires Mg(2+) as cofactor.

The protein localises to the cytoplasm. It carries out the reaction tRNA(Phe) + L-phenylalanine + ATP = L-phenylalanyl-tRNA(Phe) + AMP + diphosphate + H(+). In Ruegeria pomeroyi (strain ATCC 700808 / DSM 15171 / DSS-3) (Silicibacter pomeroyi), this protein is Phenylalanine--tRNA ligase beta subunit.